The primary structure comprises 971 residues: Translation initiation factor IF-2 (971 aa).

A compositionally biased stretch (basic and acidic residues) spans 49-63 (HLRKSHGATDGDKRK). Disordered regions lie at residues 49–86 (HLRK…ARTI) and 101–385 (DVAE…APTE). A compositionally biased stretch (low complexity) spans 105–114 (GAEQGQAQVA). Positions 121-177 (ELKRREEEARREAELLEKQAQELRERQERLEREEAERRAREEAAEAQRRRAEEEAAA) are enriched in basic and acidic residues. Low complexity predominate over residues 178 to 209 (KRAAAAAVEAQQVAAQQAAEAQQETAGAQSAQ). Positions 210-261 (DEARAAAERAAQREAAKKAEDAAREAADKTRAEQEEIRKRREAAEAEARAIR) are enriched in basic and acidic residues. A compositionally biased stretch (pro residues) spans 277–286 (PPKPVEPPKP). Residues 298-325 (KPAGASAARPAVKKPAGAAPATTAPAGA) are compositionally biased toward low complexity. Residues 355 to 368 (SSGGVDRGWRGGPK) are compositionally biased toward gly residues. The tr-type G domain maps to 471–640 (PRPPVVTVMG…LLQAEVLELK (170 aa)). The tract at residues 480-487 (GHVDHGKT) is G1. Position 480–487 (480–487 (GHVDHGKT)) interacts with GTP. The G2 stretch occupies residues 505–509 (GITQH). The tract at residues 526–529 (DTPG) is G3. Residues 526–530 (DTPGH) and 580–583 (NKID) contribute to the GTP site. Residues 580 to 583 (NKID) form a G4 region. The G5 stretch occupies residues 616–618 (SAK).

Belongs to the TRAFAC class translation factor GTPase superfamily. Classic translation factor GTPase family. IF-2 subfamily.

The protein resides in the cytoplasm. Functionally, one of the essential components for the initiation of protein synthesis. Protects formylmethionyl-tRNA from spontaneous hydrolysis and promotes its binding to the 30S ribosomal subunits. Also involved in the hydrolysis of GTP during the formation of the 70S ribosomal complex. The protein is Translation initiation factor IF-2 of Burkholderia ambifaria (strain ATCC BAA-244 / DSM 16087 / CCUG 44356 / LMG 19182 / AMMD) (Burkholderia cepacia (strain AMMD)).